The chain runs to 358 residues: Probable D-xylulose reductase A (358 aa).

C47, H72, and E73 together coordinate Zn(2+). 182-187 contributes to the NAD(+) binding site; that stretch reads GAGPVG.

The protein belongs to the zinc-containing alcohol dehydrogenase family. Zn(2+) is required as a cofactor.

It catalyses the reaction xylitol + NAD(+) = D-xylulose + NADH + H(+). The protein operates within carbohydrate degradation; L-arabinose degradation via L-arabinitol; D-xylulose 5-phosphate from L-arabinose (fungal route): step 4/5. Its function is as follows. Xylitol dehydrogenase which catalyzes the conversion of xylitol to D-xylulose. Xylose is a major component of hemicelluloses such as xylan. Most fungi utilize D-xylose via three enzymatic reactions, xylose reductase (XR), xylitol dehydrogenase (XDH), and xylulokinase, to form xylulose 5-phosphate, which enters pentose phosphate pathway. The polypeptide is Probable D-xylulose reductase A (xdhA) (Aspergillus fumigatus (strain CBS 144.89 / FGSC A1163 / CEA10) (Neosartorya fumigata)).